Consider the following 232-residue polypeptide: Aliphatic sulfonates import ATP-binding protein SsuB 2 (232 aa).

The region spanning 1–216 (MDIRVDRKAF…PRDRRDPLLA (216 aa)) is the ABC transporter domain. 33-40 (GPSGCGKS) lines the ATP pocket.

It belongs to the ABC transporter superfamily. Aliphatic sulfonates importer (TC 3.A.1.17.2) family. The complex is composed of two ATP-binding proteins (SsuB), two transmembrane proteins (SsuC) and a solute-binding protein (SsuA).

Its subcellular location is the cell inner membrane. It carries out the reaction ATP + H2O + aliphatic sulfonate-[sulfonate-binding protein]Side 1 = ADP + phosphate + aliphatic sulfonateSide 2 + [sulfonate-binding protein]Side 1.. In terms of biological role, part of the ABC transporter complex SsuABC involved in aliphatic sulfonates import. Responsible for energy coupling to the transport system. The chain is Aliphatic sulfonates import ATP-binding protein SsuB 2 from Pseudomonas syringae pv. tomato (strain ATCC BAA-871 / DC3000).